The chain runs to 106 residues: Large ribosomal subunit protein P1B (106 aa).

Ser2 bears the N-acetylserine mark. Residues 69-82 (AGAASGAAAAGGDA) show a composition bias toward low complexity. The segment at 69 to 106 (AGAASGAAAAGGDAAAEEEKEEEAAEESDDDMGFGLFD) is disordered. Over residues 83–100 (AAEEEKEEEAAEESDDDM) the composition is skewed to acidic residues. A Phosphoserine modification is found at Ser96.

It belongs to the eukaryotic ribosomal protein P1/P2 family. Component of the large ribosomal subunit (LSU). Mature yeast ribosomes consist of a small (40S) and a large (60S) subunit. The 40S small subunit contains 1 molecule of ribosomal RNA (18S rRNA) and 33 different proteins (encoded by 57 genes). The large 60S subunit contains 3 rRNA molecules (25S, 5.8S and 5S rRNA) and 46 different proteins (encoded by 81 genes). The 5 acidic ribosomal P-proteins form the stalk structure of the 60S subunit. They are organized as a pentameric complex in which uL10/P0 interacts with 2 heterodimers, P1A-P2B and P1B-P2A.

It localises to the cytoplasm. Functionally, component of the ribosome, a large ribonucleoprotein complex responsible for the synthesis of proteins in the cell. The small ribosomal subunit (SSU) binds messenger RNAs (mRNAs) and translates the encoded message by selecting cognate aminoacyl-transfer RNA (tRNA) molecules. The large subunit (LSU) contains the ribosomal catalytic site termed the peptidyl transferase center (PTC), which catalyzes the formation of peptide bonds, thereby polymerizing the amino acids delivered by tRNAs into a polypeptide chain. The nascent polypeptides leave the ribosome through a tunnel in the LSU and interact with protein factors that function in enzymatic processing, targeting, and the membrane insertion of nascent chains at the exit of the ribosomal tunnel. In Saccharomyces cerevisiae (strain ATCC 204508 / S288c) (Baker's yeast), this protein is Large ribosomal subunit protein P1B.